A 265-amino-acid polypeptide reads, in one-letter code: Imidazole glycerol phosphate synthase subunit HisF (265 aa).

Residues D11 and D130 contribute to the active site.

Belongs to the HisA/HisF family. In terms of assembly, heterodimer of HisH and HisF.

The protein localises to the cytoplasm. It carries out the reaction 5-[(5-phospho-1-deoxy-D-ribulos-1-ylimino)methylamino]-1-(5-phospho-beta-D-ribosyl)imidazole-4-carboxamide + L-glutamine = D-erythro-1-(imidazol-4-yl)glycerol 3-phosphate + 5-amino-1-(5-phospho-beta-D-ribosyl)imidazole-4-carboxamide + L-glutamate + H(+). The protein operates within amino-acid biosynthesis; L-histidine biosynthesis; L-histidine from 5-phospho-alpha-D-ribose 1-diphosphate: step 5/9. Its function is as follows. IGPS catalyzes the conversion of PRFAR and glutamine to IGP, AICAR and glutamate. The HisF subunit catalyzes the cyclization activity that produces IGP and AICAR from PRFAR using the ammonia provided by the HisH subunit. In Idiomarina loihiensis (strain ATCC BAA-735 / DSM 15497 / L2-TR), this protein is Imidazole glycerol phosphate synthase subunit HisF.